Reading from the N-terminus, the 100-residue chain is Envelope glycoprotein N (100 aa).

An N-terminal signal peptide occupies residues Met-1–Gly-27. Residues Asp-28–Thr-63 lie on the Virion surface side of the membrane. Residues Ala-64–Tyr-84 traverse the membrane as a helical segment. Topologically, residues Arg-85 to His-100 are intravirion.

Belongs to the herpesviridae glycoprotein N family. In terms of assembly, interacts (via N-terminus) with gM (via N-terminus). The gM-gN heterodimer forms the gCII complex.

It is found in the virion membrane. Its subcellular location is the host membrane. The protein resides in the host Golgi apparatus. The protein localises to the host trans-Golgi network. In terms of biological role, envelope glycoprotein necessary for proper maturation of gM and modulation of its membrane fusion activity. Also plays a critical role in virion morphogenesis. The protein is Envelope glycoprotein N of Equus caballus (Horse).